The primary structure comprises 86 residues: Small ribosomal subunit protein bS20 (86 aa).

This sequence belongs to the bacterial ribosomal protein bS20 family.

Functionally, binds directly to 16S ribosomal RNA. This is Small ribosomal subunit protein bS20 from Oceanobacillus iheyensis (strain DSM 14371 / CIP 107618 / JCM 11309 / KCTC 3954 / HTE831).